A 995-amino-acid polypeptide reads, in one-letter code: Endosome/lysosome-associated apoptosis and autophagy regulator family member 2 (995 aa).

An N-terminal signal peptide occupies residues 1–21 (MGVFCWSGCLVISLQLLLGAA). Topologically, residues 22–895 (LDNLSTCKEE…ACESIDFWLK (874 aa)) are extracellular. N-linked (GlcNAc...) asparagine glycans are attached at residues Asn24, Asn136, Asn245, Asn372, Asn527, Asn649, Asn683, Asn700, and Asn758. Residues 639 to 843 (SECLVTYTNE…LWETAEACPL (205 aa)) form the MRH domain. 2 disulfides stabilise this stretch: Cys641–Cys687 and Cys697–Cys725. Intrachain disulfides connect Cys793-Cys829 and Cys805-Cys841. An N-linked (GlcNAc...) asparagine glycan is attached at Asn883. Residues 896–916 (VGAGVGAFTAVLLIALTCYFW) traverse the membrane as a helical segment. Residues 917-995 (KKNQKLEYKY…QLKSSRAQNI (79 aa)) are Cytoplasmic-facing.

The protein belongs to the ELAPOR family. Expressed in the animal half of the embryo during gastrulation, becoming restricted to the ventral ectoderm at stage 12.5. At the neurula stage, expressed in the anterior ectoderm surrounding the neural plate, and weakly in the epidermis. Expression is especially high in the presumptive hatching gland and cement gland regions. Surprisingly, by the tailbud stage (stage 22), expression is limited to the hatching gland and is not seen in the cement gland. Conversely, in tadpoles expressed broadly in the head, heart and fin. Expression in the head is seen in the primary mouth and in the brain, eyes, otic vesicles and olfactory pits.

Its subcellular location is the cell membrane. In terms of biological role, functions as a regulator of the BMP signaling pathway and is involved in epidermal differentiation. In Xenopus laevis (African clawed frog), this protein is Endosome/lysosome-associated apoptosis and autophagy regulator family member 2 (elapor2).